A 111-amino-acid chain; its full sequence is WAP four-disulfide core domain protein 12 (111 aa).

The N-terminal stretch at 1–23 (MGSSSFLVLMVSLALVTLVAAEG) is a signal peptide. In terms of domain architecture, WAP spans 27-74 (NIEKPGVCPADNIRCIKSDPPQCHTDQDCQGIRKCCYLHCGFKCVIPV). 4 disulfides stabilise this stretch: Cys-34/Cys-62, Cys-41/Cys-66, Cys-49/Cys-61, and Cys-55/Cys-70. Residues 80–111 (GGNKDEDVSRPCPEPGWEAKPPGVFSTRCPQK) form a disordered region.

The protein resides in the secreted. Functionally, antibacterial protein. Putative acid-stable proteinase inhibitor. This chain is WAP four-disulfide core domain protein 12 (WFDC12), found in Callithrix jacchus (White-tufted-ear marmoset).